Here is a 359-residue protein sequence, read N- to C-terminus: Type-1 angiotensin II receptor (359 aa).

The Extracellular segment spans residues methionine 1–serine 25. Asparagine 4 carries N-linked (GlcNAc...) asparagine glycosylation. Residues glutamine 15 and aspartate 17 each coordinate angiotensin II. Disulfide bonds link cysteine 18–cysteine 274 and cysteine 101–cysteine 180. The chain crosses the membrane as a helical span at residues tyrosine 26 to phenylalanine 55. Residues tyrosine 56 to threonine 61 lie on the Cytoplasmic side of the membrane. Residues valine 62–alanine 89 form a helical membrane-spanning segment. Over methionine 90–asparagine 98 the chain is Extracellular. Residues histidine 99–aspartate 125 traverse the membrane as a helical segment. Over arginine 126–threonine 141 the chain is Cytoplasmic. The chain crosses the membrane as a helical span at residues methionine 142–isoleucine 165. Over histidine 166 to threonine 190 the chain is Extracellular. Arginine 167 provides a ligand contact to angiotensin II. Residue asparagine 176 is glycosylated (N-linked (GlcNAc...) asparagine). Phenylalanine 182, histidine 183, and tyrosine 184 together coordinate angiotensin II. A glycan (N-linked (GlcNAc...) asparagine) is linked at asparagine 188. A helical membrane pass occupies residues leucine 191–threonine 216. Lysine 199 contributes to the angiotensin II binding site. The Cytoplasmic portion of the chain corresponds to leucine 217–phenylalanine 239. The chain crosses the membrane as a helical span at residues arginine 240 to leucine 268. At glycine 269 to aspartate 278 the chain is on the extracellular side. Residues valine 279–phenylalanine 304 traverse the membrane as a helical segment. The Cytoplasmic portion of the chain corresponds to leucine 305–glutamate 359. Cysteine 355 carries S-palmitoyl cysteine lipidation.

Belongs to the G-protein coupled receptor 1 family. As to quaternary structure, interacts with MAS1. Interacts with ARRB1. Interacts with FLNA (via filamin repeat 21); increases PKA-mediated phosphorylation of FLNA. Post-translationally, C-terminal Ser or Thr residues may be phosphorylated.

The protein resides in the cell membrane. Functionally, receptor for angiotensin II, a vasoconstricting peptide, which acts as a key regulator of blood pressure and sodium retention by the kidney. The activated receptor in turn couples to G-alpha proteins G(q) (GNAQ, GNA11, GNA14 or GNA15) and thus activates phospholipase C and increases the cytosolic Ca(2+) concentrations, which in turn triggers cellular responses such as stimulation of protein kinase C. This Meriones unguiculatus (Mongolian jird) protein is Type-1 angiotensin II receptor (AGTR1).